We begin with the raw amino-acid sequence, 228 residues long: DNA mismatch repair protein MutH (228 aa).

It belongs to the MutH family.

It localises to the cytoplasm. Sequence-specific endonuclease that cleaves unmethylated GATC sequences. It is involved in DNA mismatch repair. In Yersinia pseudotuberculosis serotype IB (strain PB1/+), this protein is DNA mismatch repair protein MutH.